Reading from the N-terminus, the 493-residue chain is Adenylyltransferase and sulfurtransferase uba4 (493 aa).

ATP-binding positions include Gly99, Asp120, 127–131 (SNLHR), Lys144, and 188–189 (DN). Zn(2+)-binding residues include Cys237 and Cys240. Catalysis depends on Cys254, which acts as the Glycyl thioester intermediate; for adenylyltransferase activity. 2 residues coordinate Zn(2+): Cys316 and Cys319. Residues 376–491 (INKEPTIIDV…WREQIDPDWP (116 aa)) form the Rhodanese domain. The Cysteine persulfide intermediate; for sulfurtransferase activity role is filled by Cys446.

This sequence in the N-terminal section; belongs to the HesA/MoeB/ThiF family. UBA4 subfamily. It depends on Zn(2+) as a cofactor.

Its subcellular location is the cytoplasm. It localises to the cytosol. The catalysed reaction is [molybdopterin-synthase sulfur-carrier protein]-C-terminal Gly-Gly + ATP + H(+) = [molybdopterin-synthase sulfur-carrier protein]-C-terminal Gly-Gly-AMP + diphosphate. It carries out the reaction [molybdopterin-synthase sulfur-carrier protein]-C-terminal Gly-Gly-AMP + S-sulfanyl-L-cysteinyl-[cysteine desulfurase] + AH2 = [molybdopterin-synthase sulfur-carrier protein]-C-terminal-Gly-aminoethanethioate + L-cysteinyl-[cysteine desulfurase] + A + AMP + 2 H(+). It functions in the pathway tRNA modification; 5-methoxycarbonylmethyl-2-thiouridine-tRNA biosynthesis. It participates in cofactor biosynthesis; molybdopterin biosynthesis. Plays a central role in 2-thiolation of mcm(5)S(2)U at tRNA wobble positions of cytosolic tRNA(Lys), tRNA(Glu) and tRNA(Gln). Also essential during biosynthesis of the molybdenum cofactor. Acts by mediating the C-terminal thiocarboxylation of sulfur carriers urm1 and mocs2a. Its N-terminus first activates urm1 and mocs2a as acyl-adenylates (-COAMP), then the persulfide sulfur on the catalytic cysteine is transferred to urm1 and mocs2a to form thiocarboxylation (-COSH) of their C-terminus. The reaction probably involves hydrogen sulfide that is generated from the persulfide intermediate and that acts as a nucleophile towards urm1 and mocs2a. Subsequently, a transient disulfide bond is formed. Does not use thiosulfate as sulfur donor; nfs1 probably acting as a sulfur donor for thiocarboxylation reactions. In Aspergillus fumigatus (strain CBS 144.89 / FGSC A1163 / CEA10) (Neosartorya fumigata), this protein is Adenylyltransferase and sulfurtransferase uba4.